Reading from the N-terminus, the 484-residue chain is Aspartyl/glutamyl-tRNA(Asn/Gln) amidotransferase subunit B (484 aa).

This sequence belongs to the GatB/GatE family. GatB subfamily. As to quaternary structure, heterotrimer of A, B and C subunits.

It carries out the reaction L-glutamyl-tRNA(Gln) + L-glutamine + ATP + H2O = L-glutaminyl-tRNA(Gln) + L-glutamate + ADP + phosphate + H(+). It catalyses the reaction L-aspartyl-tRNA(Asn) + L-glutamine + ATP + H2O = L-asparaginyl-tRNA(Asn) + L-glutamate + ADP + phosphate + 2 H(+). Its function is as follows. Allows the formation of correctly charged Asn-tRNA(Asn) or Gln-tRNA(Gln) through the transamidation of misacylated Asp-tRNA(Asn) or Glu-tRNA(Gln) in organisms which lack either or both of asparaginyl-tRNA or glutaminyl-tRNA synthetases. The reaction takes place in the presence of glutamine and ATP through an activated phospho-Asp-tRNA(Asn) or phospho-Glu-tRNA(Gln). This Cupriavidus metallidurans (strain ATCC 43123 / DSM 2839 / NBRC 102507 / CH34) (Ralstonia metallidurans) protein is Aspartyl/glutamyl-tRNA(Asn/Gln) amidotransferase subunit B.